A 246-amino-acid polypeptide reads, in one-letter code: AA9 family lytic polysaccharide monooxygenase D (246 aa).

The first 19 residues, 1–19 (MHLLSLLFPVIALIPTVLS), serve as a signal peptide directing secretion. His20 provides a ligand contact to Cu(2+). Cys78 and Cys196 form a disulfide bridge. N-linked (GlcNAc...) asparagine glycans are attached at residues Asn86, Asn141, and Asn156. O2 contacts are provided by His182 and Gln191. Tyr193 provides a ligand contact to Cu(2+). A glycan (N-linked (GlcNAc...) asparagine) is linked at Asn235.

The protein belongs to the polysaccharide monooxygenase AA9 family. The cofactor is Cu(2+).

Its subcellular location is the secreted. It carries out the reaction [(1-&gt;4)-beta-D-glucosyl]n+m + reduced acceptor + O2 = 4-dehydro-beta-D-glucosyl-[(1-&gt;4)-beta-D-glucosyl]n-1 + [(1-&gt;4)-beta-D-glucosyl]m + acceptor + H2O.. Its function is as follows. Lytic polysaccharide monooxygenase (LPMO) that depolymerizes crystalline and amorphous polysaccharides via the oxidation of scissile alpha- or beta-(1-4)-glycosidic bonds, yielding C1 and C4 oxidation products. Catalysis by LPMOs requires the reduction of the active-site copper from Cu(II) to Cu(I) by a reducing agent and H(2)O(2) or O(2) as a cosubstrate. The polypeptide is AA9 family lytic polysaccharide monooxygenase D (Botryotinia fuckeliana (strain B05.10) (Noble rot fungus)).